Reading from the N-terminus, the 631-residue chain is Chaperone protein DnaK (631 aa).

Thr-197 carries the phosphothreonine; by autocatalysis modification. Residues 600–631 (KKENPQAADAQQGNTANAGKKKDDDVIDAEVE) are disordered.

The protein belongs to the heat shock protein 70 family.

Functionally, acts as a chaperone. The polypeptide is Chaperone protein DnaK (Wolinella succinogenes (strain ATCC 29543 / DSM 1740 / CCUG 13145 / JCM 31913 / LMG 7466 / NCTC 11488 / FDC 602W) (Vibrio succinogenes)).